The following is a 238-amino-acid chain: Sugar fermentation stimulation protein homolog (238 aa).

This sequence belongs to the SfsA family.

In Klebsiella pneumoniae (strain 342), this protein is Sugar fermentation stimulation protein homolog.